We begin with the raw amino-acid sequence, 805 residues long: Leucine--tRNA ligase (805 aa).

Residues 40–51 carry the 'HIGH' region motif; the sequence is PYPSGAGLHVGH. Positions 576–580 match the 'KMSKS' region motif; the sequence is KMSKS. Position 579 (Lys579) interacts with ATP.

This sequence belongs to the class-I aminoacyl-tRNA synthetase family.

It is found in the cytoplasm. The catalysed reaction is tRNA(Leu) + L-leucine + ATP = L-leucyl-tRNA(Leu) + AMP + diphosphate. The sequence is that of Leucine--tRNA ligase from Geobacillus thermodenitrificans (strain NG80-2).